A 106-amino-acid polypeptide reads, in one-letter code: Minor capsid protein VP2 (106 aa).

It belongs to the vesivirus VP2 protein family. As to quaternary structure, homooligomer. The portal-like structure consists in 12 copies of VP2. Interacts with capsid protein VP1.

Its subcellular location is the virion. It is found in the host cytoplasm. Functionally, minor structural protein that forms a portal-like structure at a unique three-fold axis of symmetry, following binding to the host receptor. The virion attaches to feline junctional adhesion molecule A (F11R). Once attached, the virion is endocytosed. Acidification of the endosome induces conformational change of capsid protein thereby injecting virus genomic RNA into host cytoplasm. The channel formed by VP2 may allow the delivery of the viral genome through the host endosomal membrane. This Feline calicivirus (strain CFI/68 FIV) (FCV) protein is Minor capsid protein VP2.